Here is a 219-residue protein sequence, read N- to C-terminus: NADH-quinone oxidoreductase subunit C (219 aa).

This sequence belongs to the complex I 30 kDa subunit family. In terms of assembly, NDH-1 is composed of 14 different subunits. Subunits NuoB, C, D, E, F, and G constitute the peripheral sector of the complex.

Its subcellular location is the cell inner membrane. The catalysed reaction is a quinone + NADH + 5 H(+)(in) = a quinol + NAD(+) + 4 H(+)(out). In terms of biological role, NDH-1 shuttles electrons from NADH, via FMN and iron-sulfur (Fe-S) centers, to quinones in the respiratory chain. The immediate electron acceptor for the enzyme in this species is believed to be ubiquinone. Couples the redox reaction to proton translocation (for every two electrons transferred, four hydrogen ions are translocated across the cytoplasmic membrane), and thus conserves the redox energy in a proton gradient. In Methylorubrum populi (strain ATCC BAA-705 / NCIMB 13946 / BJ001) (Methylobacterium populi), this protein is NADH-quinone oxidoreductase subunit C.